Here is a 497-residue protein sequence, read N- to C-terminus: Cysteine--tRNA ligase (497 aa).

Cysteine 46 contacts Zn(2+). The 'HIGH' region signature appears at 48 to 58; sequence PTVYSDAHLGH. Cysteine 237, histidine 262, and glutamate 266 together coordinate Zn(2+). Positions 293–297 match the 'KMSKS' region motif; it reads KMSKS. An ATP-binding site is contributed by lysine 296.

Belongs to the class-I aminoacyl-tRNA synthetase family. As to quaternary structure, monomer. The cofactor is Zn(2+).

It is found in the cytoplasm. It catalyses the reaction tRNA(Cys) + L-cysteine + ATP = L-cysteinyl-tRNA(Cys) + AMP + diphosphate. The polypeptide is Cysteine--tRNA ligase (Deinococcus geothermalis (strain DSM 11300 / CIP 105573 / AG-3a)).